We begin with the raw amino-acid sequence, 459 residues long: Argininosuccinate lyase (459 aa).

This sequence belongs to the lyase 1 family. Argininosuccinate lyase subfamily.

The protein resides in the cytoplasm. The catalysed reaction is 2-(N(omega)-L-arginino)succinate = fumarate + L-arginine. It participates in amino-acid biosynthesis; L-arginine biosynthesis; L-arginine from L-ornithine and carbamoyl phosphate: step 3/3. The polypeptide is Argininosuccinate lyase (Prochlorococcus marinus (strain MIT 9215)).